A 427-amino-acid polypeptide reads, in one-letter code: MVSVPLRWYNIAADLPEPLPPLRDPEGLREESRIALLSRILPSRLIEDEYILARWVDIPGEVRKALARIGRPTPLIRAEGLEKVLGVKGRVRIYYKSEAVLPTGSHKINTAIAQAYYAKLDGAKEIVTETGAGQWGLAASTAAALMGLKATVFMTASSFKSKIQRRLLMEAQGARVISSPSKLTDTGREALEEYGSTHPGSLGLAIAEAVEYTLESGDRRYLPGSVLEAVLMHQTVIGLEALDQLPEEPDVVVACVGGGSNFGGFTYPMIGARLRGEGFEKTRFIAAESTAAPKLTRGEYRYDGLDSSLILPLAKMYTLGHRYTPPPSHAAGLRYHGVSPSLSILRRLGLVEAEAIPQEEALASILLMARSEGVVPAPESSHAVALAARIARKLPDGSVVAFNLSGHGLLDLDALQKALEIRGASMW.

At K107 the chain carries N6-(pyridoxal phosphate)lysine.

This sequence belongs to the TrpB family. In terms of assembly, tetramer of two alpha and two beta chains. Requires pyridoxal 5'-phosphate as cofactor.

The catalysed reaction is (1S,2R)-1-C-(indol-3-yl)glycerol 3-phosphate + L-serine = D-glyceraldehyde 3-phosphate + L-tryptophan + H2O. Its pathway is amino-acid biosynthesis; L-tryptophan biosynthesis; L-tryptophan from chorismate: step 5/5. In terms of biological role, the beta subunit is responsible for the synthesis of L-tryptophan from indole and L-serine. The protein is Tryptophan synthase beta chain 1 (trpB1) of Aeropyrum pernix (strain ATCC 700893 / DSM 11879 / JCM 9820 / NBRC 100138 / K1).